Consider the following 586-residue polypeptide: Glutamate--tRNA ligase (586 aa).

Positions 114 to 124 match the 'HIGH' region motif; it reads PNPNGPWHVGH. Basic and acidic residues-rich tracts occupy residues 431 to 443 and 459 to 468; these read ARGEGPEESHEAV and HPEHPDRGDR. A disordered region spans residues 431-468; the sequence is ARGEGPEESHEAVEVPVDDGPDEATPQVHPEHPDRGDR.

It belongs to the class-I aminoacyl-tRNA synthetase family. Glutamate--tRNA ligase type 2 subfamily.

The protein resides in the cytoplasm. The catalysed reaction is tRNA(Glu) + L-glutamate + ATP = L-glutamyl-tRNA(Glu) + AMP + diphosphate. Catalyzes the attachment of glutamate to tRNA(Glu) in a two-step reaction: glutamate is first activated by ATP to form Glu-AMP and then transferred to the acceptor end of tRNA(Glu). The protein is Glutamate--tRNA ligase of Halobacterium salinarum (strain ATCC 29341 / DSM 671 / R1).